We begin with the raw amino-acid sequence, 122 residues long: MIQQESRLKVADNSGAREVLTIKVLGGSGRKTANIGDVIVCTVKQATPGGVVKKGEVVRAVVVRTKRGVRRKDGSYIRFDENAAVIIKDDKSPRGTRIFGPVARELREKDFMKIVSLAPEVL.

This sequence belongs to the universal ribosomal protein uL14 family. As to quaternary structure, part of the 50S ribosomal subunit. Forms a cluster with proteins L3 and L19. In the 70S ribosome, L14 and L19 interact and together make contacts with the 16S rRNA in bridges B5 and B8.

Binds to 23S rRNA. Forms part of two intersubunit bridges in the 70S ribosome. The chain is Large ribosomal subunit protein uL14 from Exiguobacterium sibiricum (strain DSM 17290 / CCUG 55495 / CIP 109462 / JCM 13490 / 255-15).